A 214-amino-acid polypeptide reads, in one-letter code: Holliday junction branch migration complex subunit RuvA (214 aa).

The segment at 1-64 is domain I; it reads MITRIRGEML…EDAMTLYGFT (64 aa). The domain II stretch occupies residues 65 to 143; sequence SGEQLAVFEL…DITSKDAYQD (79 aa). The flexible linker stretch occupies residues 144–160; sequence ISASEKLDNTGEKLGIS. The segment at 161–214 is domain III; the sequence is TRHKHLDELKAALSSLGYTNREIEKTVDAIQGQITEGQDMEELLRLALQKLNTK.

The protein belongs to the RuvA family. As to quaternary structure, homotetramer. Forms an RuvA(8)-RuvB(12)-Holliday junction (HJ) complex. HJ DNA is sandwiched between 2 RuvA tetramers; dsDNA enters through RuvA and exits via RuvB. An RuvB hexamer assembles on each DNA strand where it exits the tetramer. Each RuvB hexamer is contacted by two RuvA subunits (via domain III) on 2 adjacent RuvB subunits; this complex drives branch migration. In the full resolvosome a probable DNA-RuvA(4)-RuvB(12)-RuvC(2) complex forms which resolves the HJ.

It localises to the cytoplasm. Its function is as follows. The RuvA-RuvB-RuvC complex processes Holliday junction (HJ) DNA during genetic recombination and DNA repair, while the RuvA-RuvB complex plays an important role in the rescue of blocked DNA replication forks via replication fork reversal (RFR). RuvA specifically binds to HJ cruciform DNA, conferring on it an open structure. The RuvB hexamer acts as an ATP-dependent pump, pulling dsDNA into and through the RuvAB complex. HJ branch migration allows RuvC to scan DNA until it finds its consensus sequence, where it cleaves and resolves the cruciform DNA. The sequence is that of Holliday junction branch migration complex subunit RuvA from Natranaerobius thermophilus (strain ATCC BAA-1301 / DSM 18059 / JW/NM-WN-LF).